Here is a 361-residue protein sequence, read N- to C-terminus: Chorismate synthase (361 aa).

Arg-48 and Arg-54 together coordinate NADP(+). FMN-binding positions include 131–133, 243–244, Gly-287, 302–306, and Arg-328; these read RSS, NA, and KPTSS.

This sequence belongs to the chorismate synthase family. In terms of assembly, homotetramer. FMNH2 is required as a cofactor.

The enzyme catalyses 5-O-(1-carboxyvinyl)-3-phosphoshikimate = chorismate + phosphate. It functions in the pathway metabolic intermediate biosynthesis; chorismate biosynthesis; chorismate from D-erythrose 4-phosphate and phosphoenolpyruvate: step 7/7. Its function is as follows. Catalyzes the anti-1,4-elimination of the C-3 phosphate and the C-6 proR hydrogen from 5-enolpyruvylshikimate-3-phosphate (EPSP) to yield chorismate, which is the branch point compound that serves as the starting substrate for the three terminal pathways of aromatic amino acid biosynthesis. This reaction introduces a second double bond into the aromatic ring system. This chain is Chorismate synthase, found in Bradyrhizobium sp. (strain BTAi1 / ATCC BAA-1182).